A 77-amino-acid chain; its full sequence is Small ribosomal subunit protein bS18 (77 aa).

It belongs to the bacterial ribosomal protein bS18 family. Part of the 30S ribosomal subunit. Forms a tight heterodimer with protein bS6.

Functionally, binds as a heterodimer with protein bS6 to the central domain of the 16S rRNA, where it helps stabilize the platform of the 30S subunit. This chain is Small ribosomal subunit protein bS18, found in Bacillus cytotoxicus (strain DSM 22905 / CIP 110041 / 391-98 / NVH 391-98).